Here is a 396-residue protein sequence, read N- to C-terminus: Tryptophan synthase beta chain (396 aa).

An N6-(pyridoxal phosphate)lysine modification is found at lysine 86.

This sequence belongs to the TrpB family. In terms of assembly, tetramer of two alpha and two beta chains. Pyridoxal 5'-phosphate serves as cofactor.

It carries out the reaction (1S,2R)-1-C-(indol-3-yl)glycerol 3-phosphate + L-serine = D-glyceraldehyde 3-phosphate + L-tryptophan + H2O. It participates in amino-acid biosynthesis; L-tryptophan biosynthesis; L-tryptophan from chorismate: step 5/5. In terms of biological role, the beta subunit is responsible for the synthesis of L-tryptophan from indole and L-serine. The protein is Tryptophan synthase beta chain of Blochmanniella pennsylvanica (strain BPEN).